We begin with the raw amino-acid sequence, 272 residues long: Dihydropteroate synthase (272 aa).

One can recognise a Pterin-binding domain in the interval 1-251; that stretch reads MIKTKIMGIL…GVRVHNVLLN (251 aa). Asn-11 contacts Mg(2+). (7,8-dihydropterin-6-yl)methyl diphosphate contacts are provided by residues Thr-51, Asp-89, Asn-108, Asp-172, Lys-208, and 244-246; that span reads RVH.

Belongs to the DHPS family. Homodimer. The cofactor is Mg(2+).

The enzyme catalyses (7,8-dihydropterin-6-yl)methyl diphosphate + 4-aminobenzoate = 7,8-dihydropteroate + diphosphate. The protein operates within cofactor biosynthesis; tetrahydrofolate biosynthesis; 7,8-dihydrofolate from 2-amino-4-hydroxy-6-hydroxymethyl-7,8-dihydropteridine diphosphate and 4-aminobenzoate: step 1/2. Functionally, catalyzes the condensation of para-aminobenzoate (pABA) with 6-hydroxymethyl-7,8-dihydropterin diphosphate (DHPt-PP) to form 7,8-dihydropteroate (H2Pte), the immediate precursor of folate derivatives. This chain is Dihydropteroate synthase (folP), found in Staphylococcus epidermidis (strain ATCC 35984 / DSM 28319 / BCRC 17069 / CCUG 31568 / BM 3577 / RP62A).